A 255-amino-acid chain; its full sequence is MKRNFRPKLKKQVDNTKKDTIVLKHEEDKPFGPLRNDYKSDLYIDGKRWNSVDNYVFSNLLPSIDFRKQTIEHLNPHQVEKTYYDVKFEINKSTLSSAIKIGIESKLIADPQFRQALLNTAGSSIMYLSKNNYLGYGNGKWFVNTYGIWLEHFRTGMLWSIARTDKHPTLKDDQIYDSYLAEKGLKLALHYENLDKYLKIDADLQGNGMVEIIKALIKKSGREKIFVLDRETALALQRKRYIEPIVKATQLIRYI.

It belongs to the IIV-6 155L family.

This is an uncharacterized protein from Acheta domesticus (House cricket).